Here is an 84-residue protein sequence, read N- to C-terminus: Protein myomixer (84 aa).

Topologically, residues 1–4 (MPTP) are cytoplasmic. Residues 5–25 (LLPLLLRLLLSCLLLPAARLA) traverse the membrane as a helical segment. Residues 26–84 (RQYLLPLLRRLARRLGSQDMREALLGCLLFILSQRHSPDAGEASRVDRLERRERLGPQK) are Extracellular-facing. An AxLyCxL motif is present at residues 48–57 (ALLGCLLFIL). Residues 62 to 84 (SPDAGEASRVDRLERRERLGPQK) form a disordered region.

This sequence belongs to the MYMX family. In terms of assembly, interacts with MYMK.

It localises to the cell membrane. In terms of biological role, myoblast-specific protein that mediates myoblast fusion, an essential step for the formation of multi-nucleated muscle fibers. Involved in membrane fusion downstream of the lipid mixing step mediated by MYMK. Acts by generating membrane stresses via its extracellular C-terminus, leading to drive fusion pore formation. Acts independently of MYMK. Involved in skeletal muscle regeneration in response to injury by mediating the fusion of satellite cells, a population of muscle stem cells, with injured myofibers. The polypeptide is Protein myomixer (Homo sapiens (Human)).